Consider the following 404-residue polypeptide: Metacaspase-1 (404 aa).

Residues Met1 to Pro97 are disordered. Active-site residues include His195 and Cys251.

It belongs to the peptidase C14B family.

Functionally, involved in cell death (apoptosis). This Emericella nidulans (strain FGSC A4 / ATCC 38163 / CBS 112.46 / NRRL 194 / M139) (Aspergillus nidulans) protein is Metacaspase-1 (casA).